We begin with the raw amino-acid sequence, 264 residues long: Glutamate racemase (264 aa).

Substrate is bound by residues 10–11 (DS) and 42–43 (YG). Residue Cys73 is the Proton donor/acceptor of the active site. 74 to 75 (NT) serves as a coordination point for substrate. Catalysis depends on Cys183, which acts as the Proton donor/acceptor. 184–185 (TH) provides a ligand contact to substrate.

Belongs to the aspartate/glutamate racemases family.

It carries out the reaction L-glutamate = D-glutamate. Its pathway is cell wall biogenesis; peptidoglycan biosynthesis. Functionally, provides the (R)-glutamate required for cell wall biosynthesis. The protein is Glutamate racemase of Streptococcus uberis (strain ATCC BAA-854 / 0140J).